A 386-amino-acid chain; its full sequence is Cytochrome b (386 aa).

A run of 4 helical transmembrane segments spans residues T32 to M52, Y76 to G98, V113 to C133, and F179 to M199. Residues H82 and H96 each coordinate heme b. 2 residues coordinate heme b: H183 and H197. An a ubiquinone-binding site is contributed by H202. 4 helical membrane passes run F225 to F245, L289 to D309, F321 to Q341, and F348 to P368.

Belongs to the cytochrome b family. As to quaternary structure, fungal cytochrome b-c1 complex contains 10 subunits; 3 respiratory subunits, 2 core proteins and 5 low-molecular weight proteins. Cytochrome b-c1 complex is a homodimer. Heme b is required as a cofactor.

The protein localises to the mitochondrion inner membrane. Functionally, component of the ubiquinol-cytochrome c reductase complex (complex III or cytochrome b-c1 complex) that is part of the mitochondrial respiratory chain. The b-c1 complex mediates electron transfer from ubiquinol to cytochrome c. Contributes to the generation of a proton gradient across the mitochondrial membrane that is then used for ATP synthesis. This is Cytochrome b (COB) from Wickerhamomyces pijperi (Yeast).